The primary structure comprises 424 residues: FeMo cofactor biosynthesis protein NifB (424 aa).

The Radical SAM core domain maps to 12–261 (NDSSRHTYGR…PQMKHCARCR (250 aa)). Positions 30, 34, and 37 each coordinate [4Fe-4S] cluster. Residues Gly-84, Thr-136, and Val-188 each coordinate S-adenosyl-L-methionine. Positions 257 and 260 each coordinate [4Fe-4S] cluster.

The protein belongs to the radical SAM superfamily. NifB family. Monomer. The cofactor is [4Fe-4S] cluster.

The protein operates within cofactor biosynthesis; Fe-Mo cofactor biosynthesis. Functionally, involved in the biosynthesis of the iron-molybdenum cofactor (FeMo-co or M-cluster) found in the dinitrogenase enzyme of the nitrogenase complex in nitrogen-fixing microorganisms. NifB catalyzes the crucial step of radical SAM-dependent carbide insertion that occurs concomitant with the insertion of a 9th sulfur and the rearrangement/coupling of two [4Fe-4S] clusters into a [8Fe-9S-C] cluster, the precursor to the M-cluster. The protein is FeMo cofactor biosynthesis protein NifB of Chlorobaculum tepidum (strain ATCC 49652 / DSM 12025 / NBRC 103806 / TLS) (Chlorobium tepidum).